The sequence spans 264 residues: MRILVEIAYQGNNFLGFQIQQNGRTVQQQFEKLLQRIHKRHVRIHPSSRTDRGVHAIQQYFHFDTDLNIPMSQWQYAMNRTLPDDIYVNNVVTVDDDFHCRYDCVGKRYRYKVYQAQQRDPFQSGLKTFIPEPLDLDKMNRAAQQFIGTHDFTGFCSQKTEVESKVRTLYQSEIVKTDDGFDYIVTGSGFLYNMVRVLVAFLIEVGKGRHEVSDVPKLLESKNRKNVPFTAPAEGLYLEKIYLDENELLKDFGNDIKIHRKKSL.

The active-site Nucleophile is Asp-51. Tyr-109 is a binding site for substrate.

Belongs to the tRNA pseudouridine synthase TruA family. In terms of assembly, homodimer.

The catalysed reaction is uridine(38/39/40) in tRNA = pseudouridine(38/39/40) in tRNA. In terms of biological role, formation of pseudouridine at positions 38, 39 and 40 in the anticodon stem and loop of transfer RNAs. The sequence is that of tRNA pseudouridine synthase A from Staphylococcus aureus (strain MRSA252).